The sequence spans 180 residues: Pro-glucagon (180 aa).

The N-terminal stretch at 1–20 (MKNIYIVAGFFVVLVQGSWQ) is a signal peptide. The interval 25-59 (DTEEKSRSFPASQTDPLEDPDQINEDKRHSQGTFT) is disordered. Serine 54 is modified (phosphoserine). The propeptide occupies 84–89 (NRNNIA). A phosphoserine mark is found at serine 105 and serine 108. Arginine amide is present on arginine 127. Residues 131-145 (DFPEEVTIVEELGRR) constitute a propeptide that is removed on maturation. Residues serine 150 and serine 152 each carry the phosphoserine modification.

This sequence belongs to the glucagon family. Proglucagon is post-translationally processed in a tissue-specific manner in pancreatic A cells and intestinal L cells. In pancreatic A cells, the major bioactive hormone is glucagon cleaved by PCSK2/PC2. In the intestinal L cells PCSK1/PC1 liberates GLP-1, GLP-2, glicentin and oxyntomodulin. GLP-1 is further N-terminally truncated by post-translational processing in the intestinal L cells resulting in GLP-1(7-37) GLP-1-(7-36)amide. The C-terminal amidation is neither important for the metabolism of GLP-1 nor for its effects on the endocrine pancreas.

The protein resides in the secreted. Functionally, plays a key role in glucose metabolism and homeostasis. Regulates blood glucose by increasing gluconeogenesis and decreasing glycolysis. A counterregulatory hormone of insulin, raises plasma glucose levels in response to insulin-induced hypoglycemia. Plays an important role in initiating and maintaining hyperglycemic conditions in diabetes. In terms of biological role, potent stimulator of glucose-dependent insulin release. Also stimulates insulin release in response to IL6. Plays important roles on gastric motility and the suppression of plasma glucagon levels. May be involved in the suppression of satiety and stimulation of glucose disposal in peripheral tissues, independent of the actions of insulin. Has growth-promoting activities on intestinal epithelium. May also regulate the hypothalamic pituitary axis (HPA) via effects on LH, TSH, CRH, oxytocin, and vasopressin secretion. Increases islet mass through stimulation of islet neogenesis and pancreatic beta cell proliferation. Inhibits beta cell apoptosis. Its function is as follows. Stimulates intestinal growth and up-regulates villus height in the small intestine, concomitant with increased crypt cell proliferation and decreased enterocyte apoptosis. The gastrointestinal tract, from the stomach to the colon is the principal target for GLP-2 action. Plays a key role in nutrient homeostasis, enhancing nutrient assimilation through enhanced gastrointestinal function, as well as increasing nutrient disposal. Stimulates intestinal glucose transport and decreases mucosal permeability. Significantly reduces food intake. Inhibits gastric emptying in humans. Suppression of gastric emptying may lead to increased gastric distension, which may contribute to satiety by causing a sensation of fullness. Functionally, may modulate gastric acid secretion and the gastro-pyloro-duodenal activity. May play an important role in intestinal mucosal growth in the early period of life. The sequence is that of Pro-glucagon (GCG) from Mesocricetus auratus (Golden hamster).